The sequence spans 271 residues: Mannosyl-3-phosphoglycerate phosphatase (271 aa).

Residue Asp13 is the Nucleophile of the active site. Mg(2+)-binding residues include Asp13, Asp15, and Asp214.

The protein belongs to the HAD-like hydrolase superfamily. MPGP family. The cofactor is Mg(2+).

It is found in the cytoplasm. The catalysed reaction is 2-O-(alpha-D-mannosyl)-3-phosphoglycerate + H2O = (2R)-2-O-(alpha-D-mannosyl)-glycerate + phosphate. The polypeptide is Mannosyl-3-phosphoglycerate phosphatase (Escherichia coli O45:K1 (strain S88 / ExPEC)).